The following is a 274-amino-acid chain: 2,3,4,5-tetrahydropyridine-2,6-dicarboxylate N-succinyltransferase (274 aa).

R106 and D143 together coordinate substrate.

This sequence belongs to the transferase hexapeptide repeat family. As to quaternary structure, homotrimer.

It is found in the cytoplasm. The catalysed reaction is (S)-2,3,4,5-tetrahydrodipicolinate + succinyl-CoA + H2O = (S)-2-succinylamino-6-oxoheptanedioate + CoA. The protein operates within amino-acid biosynthesis; L-lysine biosynthesis via DAP pathway; LL-2,6-diaminopimelate from (S)-tetrahydrodipicolinate (succinylase route): step 1/3. This Herminiimonas arsenicoxydans protein is 2,3,4,5-tetrahydropyridine-2,6-dicarboxylate N-succinyltransferase.